Reading from the N-terminus, the 62-residue chain is Small, acid-soluble spore protein A (62 aa).

This sequence belongs to the alpha/beta-type SASP family.

Its function is as follows. SASP are bound to spore DNA. They are double-stranded DNA-binding proteins that cause DNA to change to an a-like conformation. They protect the DNA backbone from chemical and enzymatic cleavage and are thus involved in dormant spore's high resistance to UV light. In Priestia megaterium (Bacillus megaterium), this protein is Small, acid-soluble spore protein A (sasP-A).